We begin with the raw amino-acid sequence, 339 residues long: Phosphate acyltransferase (339 aa).

This sequence belongs to the PlsX family. As to quaternary structure, homodimer. Probably interacts with PlsY.

It localises to the cytoplasm. It carries out the reaction a fatty acyl-[ACP] + phosphate = an acyl phosphate + holo-[ACP]. It participates in lipid metabolism; phospholipid metabolism. Catalyzes the reversible formation of acyl-phosphate (acyl-PO(4)) from acyl-[acyl-carrier-protein] (acyl-ACP). This enzyme utilizes acyl-ACP as fatty acyl donor, but not acyl-CoA. This is Phosphate acyltransferase from Aeromonas salmonicida (strain A449).